The sequence spans 405 residues: S-arrestin (405 aa).

The residue at position 234 (T234) is a Phosphothreonine.

This sequence belongs to the arrestin family. Monomer. Homodimer. Homotetramer. Interacts with RHO (via the phosphorylated C-terminus).

The protein resides in the cell projection. Its subcellular location is the cilium. The protein localises to the photoreceptor outer segment. It localises to the membrane. Its function is as follows. Binds to photoactivated, phosphorylated RHO and terminates RHO signaling via G-proteins by competing with G-proteins for the same binding site on RHO. May play a role in preventing light-dependent degeneration of retinal photoreceptor cells. This is S-arrestin (SAG) from Canis lupus familiaris (Dog).